Consider the following 185-residue polypeptide: Intraflagellar transport protein 22 homolog (185 aa).

GTP contacts are provided by residues 10–17 (GPCESGKT), 63–67 (DCGGD), and 123–126 (HKPG). Serine 137 bears the Phosphoserine mark.

This sequence belongs to the small GTPase superfamily. Rab family. As to quaternary structure, component of the IFT complex B, at least composed of IFT20, IFT22, IFT25, IFT27, IFT46, IFT52, TRAF3IP1/IFT54, IFT57, IFT74, IFT80, IFT81, and IFT88. Interacts with IFT88. Interacts with CFAP61.

Its subcellular location is the cell projection. It is found in the cilium. Small GTPase-like component of the intraflagellar transport (IFT) complex B. The protein is Intraflagellar transport protein 22 homolog (IFT22) of Homo sapiens (Human).